An 844-amino-acid polypeptide reads, in one-letter code: RING finger containing E3 ubiquitin-protein ligase WSV222 (844 aa).

229 to 236 (AEDDKGKT) is an ATP binding site. The RING-type; atypical zinc-finger motif lies at 308–359 (CGVCATSVEEDENEGKTTSLSWYQMNCKHYIHCECLMGMCAAAGNVQCPMCR).

In terms of assembly, interacts with host UBE2E1/UBCH6; this interaction results in WSV222 auto-ubiquitination. Interacts with host tumor suppressor-like protein.

The catalysed reaction is S-ubiquitinyl-[E2 ubiquitin-conjugating enzyme]-L-cysteine + [acceptor protein]-L-lysine = [E2 ubiquitin-conjugating enzyme]-L-cysteine + N(6)-ubiquitinyl-[acceptor protein]-L-lysine.. It participates in protein modification; protein ubiquitination. Functionally, probable E3 ubiquitin-protein ligase which accepts ubiquitin from the E2 ubiquitin-conjugating enzyme UBE2E1/UBCH6 in the form of a thioester and then directly transfers the ubiquitin to targeted substrates. Mediates ubiquitination of host tumor-suppressor-like protein (TSL) targeting it for degradation. Might function as an anti-apoptosis protein by counteracting TSL-induced apoptosis. The chain is RING finger containing E3 ubiquitin-protein ligase WSV222 from White spot syndrome virus (isolate Shrimp/China/Tongan/1996) (WSSV).